A 192-amino-acid polypeptide reads, in one-letter code: Putative BTB/POZ domain-containing protein At4g04090 (192 aa).

Positions 23–96 (VDVRLMARDS…TYSDGSMLSE (74 aa)) constitute a BTB domain.

The protein operates within protein modification; protein ubiquitination. May act as a substrate-specific adapter of an E3 ubiquitin-protein ligase complex (CUL3-RBX1-BTB) which mediates the ubiquitination and subsequent proteasomal degradation of target proteins. The protein is Putative BTB/POZ domain-containing protein At4g04090 of Arabidopsis thaliana (Mouse-ear cress).